We begin with the raw amino-acid sequence, 383 residues long: Centractin (383 aa).

The segment at 227–246 (PQKEEELLEPDSSSSKPVQP) is disordered.

Belongs to the actin family. ARP1 subfamily.

It is found in the cytoplasm. The protein localises to the cytoskeleton. It localises to the microtubule organizing center. The protein resides in the centrosome. Functionally, component of a multi-subunit complex, PPK2 (poly P kinase complex 2) involved in microtubule based vesicle motility. It is associated with the centrosome. PPK2 complex can synthesize a poly chain of hundreds of phosphate residues linked by ATP-like bonds. This is Centractin (arpA) from Dictyostelium discoideum (Social amoeba).